The following is a 428-amino-acid chain: Serine--tRNA ligase (428 aa).

Residue 235–237 coordinates L-serine; the sequence is TAE. 266-268 provides a ligand contact to ATP; sequence RSE. E289 lines the L-serine pocket. 353–356 serves as a coordination point for ATP; that stretch reads EISS. S389 is an L-serine binding site.

Belongs to the class-II aminoacyl-tRNA synthetase family. Type-1 seryl-tRNA synthetase subfamily. In terms of assembly, homodimer. The tRNA molecule binds across the dimer.

The protein resides in the cytoplasm. The catalysed reaction is tRNA(Ser) + L-serine + ATP = L-seryl-tRNA(Ser) + AMP + diphosphate + H(+). The enzyme catalyses tRNA(Sec) + L-serine + ATP = L-seryl-tRNA(Sec) + AMP + diphosphate + H(+). Its pathway is aminoacyl-tRNA biosynthesis; selenocysteinyl-tRNA(Sec) biosynthesis; L-seryl-tRNA(Sec) from L-serine and tRNA(Sec): step 1/1. In terms of biological role, catalyzes the attachment of serine to tRNA(Ser). Is also able to aminoacylate tRNA(Sec) with serine, to form the misacylated tRNA L-seryl-tRNA(Sec), which will be further converted into selenocysteinyl-tRNA(Sec). This Shewanella sediminis (strain HAW-EB3) protein is Serine--tRNA ligase.